The sequence spans 278 residues: Protoheme IX farnesyltransferase 1 (278 aa).

The next 9 helical transmembrane spans lie at 12–32, 35–55, 76–96, 98–118, 129–149, 158–178, 199–221, 226–248, and 255–275; these read VIWL…GGVD, LFSL…FNHY, LITP…GISL, FLLL…FYAV, WLNI…GYAL, AVLI…ALAF, ERAV…WLYL, GAGG…YAAV, and MWKM…ALIL.

The protein belongs to the UbiA prenyltransferase family. Protoheme IX farnesyltransferase subfamily.

It localises to the cell membrane. The catalysed reaction is heme b + (2E,6E)-farnesyl diphosphate + H2O = Fe(II)-heme o + diphosphate. The protein operates within porphyrin-containing compound metabolism; heme O biosynthesis; heme O from protoheme: step 1/1. In terms of biological role, converts heme B (protoheme IX) to heme O by substitution of the vinyl group on carbon 2 of heme B porphyrin ring with a hydroxyethyl farnesyl side group. The polypeptide is Protoheme IX farnesyltransferase 1 (Pyrobaculum aerophilum (strain ATCC 51768 / DSM 7523 / JCM 9630 / CIP 104966 / NBRC 100827 / IM2)).